Consider the following 315-residue polypeptide: DNA-directed RNA polymerase subunit alpha (315 aa).

Residues 1–228 (MLEIEKPIIE…EHFKLFMSLT (228 aa)) form an alpha N-terminal domain (alpha-NTD) region. Positions 245–315 (KEKVLEMTVE…LGLALKLTEE (71 aa)) are alpha C-terminal domain (alpha-CTD).

It belongs to the RNA polymerase alpha chain family. As to quaternary structure, homodimer. The RNAP catalytic core consists of 2 alpha, 1 beta, 1 beta' and 1 omega subunit. When a sigma factor is associated with the core the holoenzyme is formed, which can initiate transcription.

The enzyme catalyses RNA(n) + a ribonucleoside 5'-triphosphate = RNA(n+1) + diphosphate. Functionally, DNA-dependent RNA polymerase catalyzes the transcription of DNA into RNA using the four ribonucleoside triphosphates as substrates. This chain is DNA-directed RNA polymerase subunit alpha, found in Clostridium beijerinckii (strain ATCC 51743 / NCIMB 8052) (Clostridium acetobutylicum).